Here is a 448-residue protein sequence, read N- to C-terminus: ATP synthase subunit b-delta (448 aa).

The ATP synthase subunit b stretch occupies residues 1–168; that stretch reads MSTFIGQLIG…GSVGAAKRPV (168 aa). Residues 4–24 traverse the membrane as a helical segment; sequence FIGQLIGFAVIVFLVVKYVVP. The tract at residues 169–448 is ATP synthase subunit delta; that stretch reads PGGYSGMHAA…LSAAALHLPN (280 aa).

This sequence in the N-terminal section; belongs to the ATPase B chain family. It in the C-terminal section; belongs to the ATPase delta chain family. F-type ATPases have 2 components, F(1) - the catalytic core - and F(0) - the membrane proton channel. F(1) has five subunits: alpha(3), beta(3), gamma(1), delta(1), epsilon(1). F(0) has three main subunits: a(1), b(2) and c(10-14). The alpha and beta chains form an alternating ring which encloses part of the gamma chain. F(1) is attached to F(0) by a central stalk formed by the gamma and epsilon chains, while a peripheral stalk is formed by the delta and b chains.

Its subcellular location is the cell membrane. Its function is as follows. F(1)F(0) ATP synthase produces ATP from ADP in the presence of a proton or sodium gradient. F-type ATPases consist of two structural domains, F(1) containing the extramembraneous catalytic core and F(0) containing the membrane proton channel, linked together by a central stalk and a peripheral stalk. During catalysis, ATP synthesis in the catalytic domain of F(1) is coupled via a rotary mechanism of the central stalk subunits to proton translocation. Functionally, this fusion protein includes a component of the F(0) channel (subunit b) and of the F(1) subunit (subunit delta). Two copies of subunit b and one of delta together form the peripheral 'stator' stalk which links F(1) to F(0). The protein is ATP synthase subunit b-delta (atpFH) of Mycobacteroides abscessus (strain ATCC 19977 / DSM 44196 / CCUG 20993 / CIP 104536 / JCM 13569 / NCTC 13031 / TMC 1543 / L948) (Mycobacterium abscessus).